We begin with the raw amino-acid sequence, 483 residues long: Adenylyltransferase and sulfurtransferase uba4 (483 aa).

Residues G100, D121, 128–132 (SNLHR), K145, and 178–179 (DN) each bind ATP. The Zn(2+) site is built by C227 and C230. C244 serves as the catalytic Glycyl thioester intermediate; for adenylyltransferase activity. 2 residues coordinate Zn(2+): C306 and C309. Residues 366–481 (ISKEPTIIDV…WREQIDPDWP (116 aa)) enclose the Rhodanese domain. C436 acts as the Cysteine persulfide intermediate; for sulfurtransferase activity in catalysis.

It in the N-terminal section; belongs to the HesA/MoeB/ThiF family. UBA4 subfamily. Requires Zn(2+) as cofactor.

The protein localises to the cytoplasm. It localises to the cytosol. It carries out the reaction [molybdopterin-synthase sulfur-carrier protein]-C-terminal Gly-Gly + ATP + H(+) = [molybdopterin-synthase sulfur-carrier protein]-C-terminal Gly-Gly-AMP + diphosphate. The catalysed reaction is [molybdopterin-synthase sulfur-carrier protein]-C-terminal Gly-Gly-AMP + S-sulfanyl-L-cysteinyl-[cysteine desulfurase] + AH2 = [molybdopterin-synthase sulfur-carrier protein]-C-terminal-Gly-aminoethanethioate + L-cysteinyl-[cysteine desulfurase] + A + AMP + 2 H(+). It functions in the pathway tRNA modification; 5-methoxycarbonylmethyl-2-thiouridine-tRNA biosynthesis. In terms of biological role, plays a central role in 2-thiolation of mcm(5)S(2)U at tRNA wobble positions of cytosolic tRNA(Lys), tRNA(Glu) and tRNA(Gln). Also essential during biosynthesis of the molybdenum cofactor. Acts by mediating the C-terminal thiocarboxylation of sulfur carriers urm1 and mocs2a. Its N-terminus first activates urm1 and mocs2a as acyl-adenylates (-COAMP), then the persulfide sulfur on the catalytic cysteine is transferred to urm1 and mocs2a to form thiocarboxylation (-COSH) of their C-terminus. The reaction probably involves hydrogen sulfide that is generated from the persulfide intermediate and that acts as a nucleophile towards urm1 and mocs2a. Subsequently, a transient disulfide bond is formed. Does not use thiosulfate as sulfur donor; nfs1 probably acting as a sulfur donor for thiocarboxylation reactions. The protein is Adenylyltransferase and sulfurtransferase uba4 of Neosartorya fischeri (strain ATCC 1020 / DSM 3700 / CBS 544.65 / FGSC A1164 / JCM 1740 / NRRL 181 / WB 181) (Aspergillus fischerianus).